Here is a 197-residue protein sequence, read N- to C-terminus: ATP-dependent Clp protease proteolytic subunit (197 aa).

Serine 100 serves as the catalytic Nucleophile. The active site involves histidine 125.

Belongs to the peptidase S14 family. In terms of assembly, component of the chloroplastic Clp protease core complex.

It is found in the plastid. It localises to the chloroplast stroma. It carries out the reaction Hydrolysis of proteins to small peptides in the presence of ATP and magnesium. alpha-casein is the usual test substrate. In the absence of ATP, only oligopeptides shorter than five residues are hydrolyzed (such as succinyl-Leu-Tyr-|-NHMec, and Leu-Tyr-Leu-|-Tyr-Trp, in which cleavage of the -Tyr-|-Leu- and -Tyr-|-Trp bonds also occurs).. Functionally, cleaves peptides in various proteins in a process that requires ATP hydrolysis. Has a chymotrypsin-like activity. Plays a major role in the degradation of misfolded proteins. The protein is ATP-dependent Clp protease proteolytic subunit of Angiopteris evecta (Mule's foot fern).